Reading from the N-terminus, the 1225-residue chain is uncharacterized protein (1225 aa).

Residues 1–27 (MKRFLHRVKWPLLLSSIAVSLGIVAVA) form the signal peptide. Cysteine 28 carries N-palmitoyl cysteine lipidation. The S-diacylglycerol cysteine moiety is linked to residue cysteine 28. The disordered stretch occupies residues 995–1014 (QSEKSSSNGGQAQLQSTQSS).

Belongs to the MG307/MG309/MG338 family.

The protein resides in the cell membrane. This is an uncharacterized protein from Mycoplasma genitalium (strain ATCC 33530 / DSM 19775 / NCTC 10195 / G37) (Mycoplasmoides genitalium).